The following is a 341-amino-acid chain: Inositol monophosphatase 3 (341 aa).

A helical transmembrane segment spans residues 11-31; that stretch reads LGIAVFCLLGVGVIYHLYAGV. Glu-117, Asp-157, Leu-159, Asp-160, and Asp-283 together coordinate Mg(2+). Residue Glu-117 coordinates substrate. Residues 159 to 162 and Asp-283 each bind substrate; that span reads LDAT.

This sequence belongs to the inositol monophosphatase superfamily. It depends on Mg(2+) as a cofactor.

Its subcellular location is the membrane. It carries out the reaction a myo-inositol phosphate + H2O = myo-inositol + phosphate. Its pathway is polyol metabolism; myo-inositol biosynthesis; myo-inositol from D-glucose 6-phosphate: step 2/2. The polypeptide is Inositol monophosphatase 3 (bpnt2) (Danio rerio (Zebrafish)).